The chain runs to 449 residues: Cortexillin-2 (449 aa).

An actin-binding region spans residues 1–231; it reads MTDLHKEWEK…ILYTSLFFHA (231 aa). Calponin-homology (CH) domains are found at residues 10 to 119 and 128 to 233; these read KVQE…RKYR and KSSE…HAYR. Coiled-coil stretches lie at residues 232-364 and 408-441; these read YRAK…AEGL and QFEE…LKSA.

It belongs to the cortexillin family. Homodimer; parallel.

It localises to the cytoplasm. It is found in the cytoskeleton. Its function is as follows. Actin-bundling protein. When linked to F-actin the actin filaments form preferentially anti-parallel bundles that associate into meshworks. Plays a major role in cytokinesis. The protein is Cortexillin-2 (ctxB) of Heterostelium pallidum (strain ATCC 26659 / Pp 5 / PN500) (Cellular slime mold).